The primary structure comprises 216 residues: Uracil phosphoribosyltransferase (216 aa).

30–34 (KTLVR) contacts GTP. 5-phospho-alpha-D-ribose 1-diphosphate contacts are provided by residues Arg-80, Arg-105, and 140–148 (DPMIATAST). Uracil is bound by residues Ile-203 and 208-210 (GDA). Position 209 (Asp-209) interacts with 5-phospho-alpha-D-ribose 1-diphosphate.

It belongs to the UPRTase family. It depends on Mg(2+) as a cofactor.

The enzyme catalyses UMP + diphosphate = 5-phospho-alpha-D-ribose 1-diphosphate + uracil. It participates in pyrimidine metabolism; UMP biosynthesis via salvage pathway; UMP from uracil: step 1/1. With respect to regulation, allosterically activated by GTP. Functionally, catalyzes the conversion of uracil and 5-phospho-alpha-D-ribose 1-diphosphate (PRPP) to UMP and diphosphate. This is Uracil phosphoribosyltransferase from Sulfurisphaera tokodaii (strain DSM 16993 / JCM 10545 / NBRC 100140 / 7) (Sulfolobus tokodaii).